The following is a 312-amino-acid chain: UDP-N-acetylenolpyruvoylglucosamine reductase (312 aa).

Residues 30-202 (RVGGPAQWLA…VAAQFQLEPG (173 aa)) enclose the FAD-binding PCMH-type domain. The active site involves Arg181. Catalysis depends on Ser232, which acts as the Proton donor. Residue Glu302 is part of the active site.

It belongs to the MurB family. It depends on FAD as a cofactor.

Its subcellular location is the cytoplasm. It carries out the reaction UDP-N-acetyl-alpha-D-muramate + NADP(+) = UDP-N-acetyl-3-O-(1-carboxyvinyl)-alpha-D-glucosamine + NADPH + H(+). Its pathway is cell wall biogenesis; peptidoglycan biosynthesis. Its function is as follows. Cell wall formation. This is UDP-N-acetylenolpyruvoylglucosamine reductase from Synechococcus sp. (strain CC9311).